Here is a 377-residue protein sequence, read N- to C-terminus: Leukocyte elastase inhibitor (377 aa).

Methionine 1 is subject to N-acetylmethionine.

This sequence belongs to the serpin family. Ov-serpin subfamily.

The protein localises to the cytoplasm. Regulates the activity of the neutrophil proteases. This Xenopus tropicalis (Western clawed frog) protein is Leukocyte elastase inhibitor (serpinb1).